A 203-amino-acid polypeptide reads, in one-letter code: Phospho-2-dehydro-3-deoxyheptonate aldolase (203 aa).

Over residues 1–10 (MIDRLVRDSR) the composition is skewed to basic and acidic residues. The disordered stretch occupies residues 1-28 (MIDRLVRDSRGPVTERNPPHMSLSAGPA).

This sequence belongs to the class-I DAHP synthase family.

It catalyses the reaction D-erythrose 4-phosphate + phosphoenolpyruvate + H2O = 7-phospho-2-dehydro-3-deoxy-D-arabino-heptonate + phosphate. Its pathway is metabolic intermediate biosynthesis; chorismate biosynthesis; chorismate from D-erythrose 4-phosphate and phosphoenolpyruvate: step 1/7. In terms of biological role, stereospecific condensation of phosphoenolpyruvate (PEP) and D-erythrose-4-phosphate (E4P) giving rise to 3-deoxy-D-arabino-heptulosonate-7-phosphate (DAHP). This chain is Phospho-2-dehydro-3-deoxyheptonate aldolase (aroA), found in Amycolatopsis methanolica.